Reading from the N-terminus, the 256-residue chain is Small ribosomal subunit protein eS1 (256 aa).

An N-acetylalanine; partial modification is found at alanine 2.

The protein belongs to the eukaryotic ribosomal protein eS1 family. Component of the small ribosomal subunit. Mature ribosomes consist of a small (40S) and a large (60S) subunit. The 40S subunit contains about 33 different proteins and 1 molecule of RNA (18S). The 60S subunit contains about 49 different proteins and 3 molecules of RNA (25S, 5.8S and 5S).

It localises to the cytoplasm. The polypeptide is Small ribosomal subunit protein eS1 (Lentinula edodes (Shiitake mushroom)).